A 116-amino-acid polypeptide reads, in one-letter code: NADPH-dependent 7-cyano-7-deazaguanine reductase (116 aa).

Catalysis depends on C31, which acts as the Thioimide intermediate. D38 functions as the Proton donor in the catalytic mechanism. Residues 53 to 55 (IEL) and 72 to 73 (YE) each bind substrate.

The protein belongs to the GTP cyclohydrolase I family. QueF type 1 subfamily.

It is found in the cytoplasm. It carries out the reaction 7-aminomethyl-7-carbaguanine + 2 NADP(+) = 7-cyano-7-deazaguanine + 2 NADPH + 3 H(+). It functions in the pathway tRNA modification; tRNA-queuosine biosynthesis. Its function is as follows. Catalyzes the NADPH-dependent reduction of 7-cyano-7-deazaguanine (preQ0) to 7-aminomethyl-7-deazaguanine (preQ1). The polypeptide is NADPH-dependent 7-cyano-7-deazaguanine reductase (Pelodictyon phaeoclathratiforme (strain DSM 5477 / BU-1)).